A 420-amino-acid polypeptide reads, in one-letter code: Glucose-1-phosphate adenylyltransferase (420 aa).

Alpha-D-glucose 1-phosphate is bound by residues tyrosine 107, glycine 172, 187 to 188, and serine 205; that span reads EK.

Belongs to the bacterial/plant glucose-1-phosphate adenylyltransferase family. Homotetramer.

It catalyses the reaction alpha-D-glucose 1-phosphate + ATP + H(+) = ADP-alpha-D-glucose + diphosphate. Its pathway is glycan biosynthesis; glycogen biosynthesis. Its function is as follows. Involved in the biosynthesis of ADP-glucose, a building block required for the elongation reactions to produce glycogen. Catalyzes the reaction between ATP and alpha-D-glucose 1-phosphate (G1P) to produce pyrophosphate and ADP-Glc. The polypeptide is Glucose-1-phosphate adenylyltransferase (Rhizobium etli (strain CIAT 652)).